A 453-amino-acid chain; its full sequence is tRNA modification GTPase MnmE (453 aa).

The (6S)-5-formyl-5,6,7,8-tetrahydrofolate site is built by Arg-22, Glu-79, and Lys-119. One can recognise a TrmE-type G domain in the interval 215-376; that stretch reads GMKVVIAGRP…LRNHLKECMG (162 aa). Asn-225 is a K(+) binding site. GTP is bound by residues 225–230, 244–250, 269–272, and 334–337; these read NAGKSS, TDIAGTT, DTAG, and NKAD. A Mg(2+)-binding site is contributed by Ser-229. K(+)-binding residues include Thr-244, Ile-246, and Thr-249. Residue Thr-250 coordinates Mg(2+). Lys-453 contributes to the (6S)-5-formyl-5,6,7,8-tetrahydrofolate binding site.

The protein belongs to the TRAFAC class TrmE-Era-EngA-EngB-Septin-like GTPase superfamily. TrmE GTPase family. As to quaternary structure, homodimer. Heterotetramer of two MnmE and two MnmG subunits. Requires K(+) as cofactor.

It is found in the cytoplasm. Exhibits a very high intrinsic GTPase hydrolysis rate. Involved in the addition of a carboxymethylaminomethyl (cmnm) group at the wobble position (U34) of certain tRNAs, forming tRNA-cmnm(5)s(2)U34. This chain is tRNA modification GTPase MnmE, found in Vibrio parahaemolyticus serotype O3:K6 (strain RIMD 2210633).